The primary structure comprises 586 residues: MASVTSLSDSVQQHLASALTATRPEAAGADPLLRRSDRADYQANGILALAKKTKANPRELAAEVVARITTGDELIEDVEVSGPGFLNITVADRAITANLAARLADGERLGVPLKQDAGTTVVDYAQPNVAKEMHVGHLRSAVIGDALRSMLDFTGEKTIGRHHIGDWGTQFGMLIQYLFEHPGELAPAGDIDGEQAMSNLNRVYKASRAVFDTDEEFKERARRRVVALQSGDKETLDLWQQFVDESKVYFYSVFEKLDMEIRDEEIVGESAYNDGMPETARLLEEMGVAVRSEGALVVFFDEIRGKDDQPVPLIVQKADGGFGYAASDLTAIRNRVQDLHATTLLYVVDVRQSLHFRMVFETARRAGWLGDEVTAHNMGYGTVLGADGKPFKTRAGETVRLEDLLDEAVQRAAEVVREKARDLTEDEIQERAAQVGIGAVKYADLSTSPNRDYKFDLDQMVSLNGDTSVYLQYAYARIQSILRKAGEVRPAAHPELALHEAERALGLHLDAFGPTVFEAAAEYAPHKLAAYLYQLASLYTTFYDKCPVLKAETPEQVENRLFLCDLTARTLHRGMALLGIRTPERL.

The short motif at 127–137 is the 'HIGH' region element; the sequence is PNVAKEMHVGH.

This sequence belongs to the class-I aminoacyl-tRNA synthetase family. As to quaternary structure, monomer.

It is found in the cytoplasm. The enzyme catalyses tRNA(Arg) + L-arginine + ATP = L-arginyl-tRNA(Arg) + AMP + diphosphate. The protein is Arginine--tRNA ligase (argS) of Streptomyces coelicolor (strain ATCC BAA-471 / A3(2) / M145).